A 123-amino-acid polypeptide reads, in one-letter code: Large ribosomal subunit protein bL12 (123 aa).

It belongs to the bacterial ribosomal protein bL12 family. Homodimer. Part of the ribosomal stalk of the 50S ribosomal subunit. Forms a multimeric L10(L12)X complex, where L10 forms an elongated spine to which 2 to 4 L12 dimers bind in a sequential fashion. Binds GTP-bound translation factors.

In terms of biological role, forms part of the ribosomal stalk which helps the ribosome interact with GTP-bound translation factors. Is thus essential for accurate translation. This Photorhabdus laumondii subsp. laumondii (strain DSM 15139 / CIP 105565 / TT01) (Photorhabdus luminescens subsp. laumondii) protein is Large ribosomal subunit protein bL12.